Consider the following 387-residue polypeptide: Probable WRKY transcription factor 36 (387 aa).

A DNA-binding region (WRKY) is located at residues 197–264 (CEDPSINDGC…YEGNHDHPLP (68 aa)). The interval 322–366 (RPNYPNQLPDDYPLSSSSFSLNFSSPDPPPPSSHDHTLNFSGLRT) is disordered. Over residues 329 to 346 (LPDDYPLSSSSFSLNFSS) the composition is skewed to low complexity.

It localises to the nucleus. Functionally, transcription factor. Interacts specifically with the W box (5'-(T)TGAC[CT]-3'), a frequently occurring elicitor-responsive cis-acting element. The sequence is that of Probable WRKY transcription factor 36 (WRKY36) from Arabidopsis thaliana (Mouse-ear cress).